A 207-amino-acid polypeptide reads, in one-letter code: Uracil phosphoribosyltransferase (207 aa).

Residues R77, R102, and D129 to S137 contribute to the 5-phospho-alpha-D-ribose 1-diphosphate site. Uracil contacts are provided by residues I192 and G197–A199. Residue D198 coordinates 5-phospho-alpha-D-ribose 1-diphosphate.

This sequence belongs to the UPRTase family. It depends on Mg(2+) as a cofactor.

The catalysed reaction is UMP + diphosphate = 5-phospho-alpha-D-ribose 1-diphosphate + uracil. The protein operates within pyrimidine metabolism; UMP biosynthesis via salvage pathway; UMP from uracil: step 1/1. Its activity is regulated as follows. Allosterically activated by GTP. Its function is as follows. Catalyzes the conversion of uracil and 5-phospho-alpha-D-ribose 1-diphosphate (PRPP) to UMP and diphosphate. In Mycobacterium marinum (strain ATCC BAA-535 / M), this protein is Uracil phosphoribosyltransferase.